The primary structure comprises 59 residues: Sec-independent protein translocase protein TatA (59 aa).

Residues 1–21 traverse the membrane as a helical segment; the sequence is MFSNIGFPGLILILVAVLILF.

Belongs to the TatA/E family. As to quaternary structure, forms a complex with TatC.

Its subcellular location is the cell membrane. Functionally, part of the twin-arginine translocation (Tat) system that transports large folded proteins containing a characteristic twin-arginine motif in their signal peptide across membranes. TatA could form the protein-conducting channel of the Tat system. In Bacillus mycoides (strain KBAB4) (Bacillus weihenstephanensis), this protein is Sec-independent protein translocase protein TatA.